Consider the following 301-residue polypeptide: Runt-related transcription factor rnt-1 (301 aa).

One can recognise a Runt domain in the interval Asn10–Ile138. 3 interaction with DNA regions span residues Arg40–Ser44, Arg95–Gly103, and Val128–Arg137. Chloride-binding residues include Arg99 and Val130. Residues Pro237–Phe301 form a disordered region. Ser255 carries the post-translational modification Phosphoserine. Positions Ser255–Ser276 are enriched in polar residues. The segment covering Val285–Phe301 has biased composition (low complexity).

As to quaternary structure, interacts with CBFbeta homolog bro-1; acts to increase the affinity and specificity of interaction of rnt-1 with DNA. Interacts with TGF-beta pathway protein sma-4. Post-translationally, may be ubiquitinated in order to be targeted for proteasome-mediated degradation in intestinal cells. May be phosphorylated by members of the p38 MAP kinase pathway. As to expression, expressed in the intestine.

Its subcellular location is the nucleus. Its function is as follows. Transcription factor. Binds to regulatory DNA sequences in order to modulate transcription; negatively autoregulates its own expression, perhaps dependent upon CBF beta homolog bro-1. Promotes proliferation, and prevents differentiation, of seam cells, a stem cell-like lineage, acting in concert with bro-1. Required for controlling cell proliferation in the seam cells, perhaps by repressing expression of cyclin-dependent kinase inhibitor cki-1. Inhibition of seam cell differentiation is regulated by rnt-1 and bro-1, perhaps acting upstream of pop-1, by antagonizing pop-1 repressor function. Required for asymmetrical cell divisions in the lineage derived from a posterior embryonic seam cell, the T blast cell, and for asymmetric expression of zinc finger protein tlp-1. Regulates growth and male tail development. Involved in the oxidative stress response, perhaps downstream of the p38 MAP kinase pathway, and acting as part of a negative feedback loop via a transcriptional target gene, tyrosine-protein phosphatase vhp-1. Positively modulates dopaminergic signaling in a non-cell autonomous manner. May be involved in TGF-beta signaling. The protein is Runt-related transcription factor rnt-1 of Caenorhabditis elegans.